A 212-amino-acid polypeptide reads, in one-letter code: Peroxisomal membrane protein 4 (212 aa).

The next 2 membrane-spanning stretches (helical) occupy residues 97–117 (GETH…LLFG) and 153–173 (WDPF…LFEY). The N-linked (GlcNAc...) asparagine glycan is linked to Asn206.

It belongs to the peroxisomal membrane protein PXMP2/4 family. In terms of assembly, interacts with PEX19.

The protein localises to the peroxisome membrane. This Mus musculus (Mouse) protein is Peroxisomal membrane protein 4 (Pxmp4).